The sequence spans 809 residues: MTLKERCVFKLLTCLTTQHDLRLVLVASAVCLAGCFTTFRLYSRMRGARGVVRAAWLLLTGLVAGSSVWATHFIAMVAFTPGLKTGYSPTGTLLSLMIAALFMASGFAVASAQRSTTNDFAGGVLIGLGVAAMHYMGMSAFVTQGQLVWEHATVGMSAVLGVGGATAALLLAGTARTIRRQAVGGGMLCLGIVMLHFTGMSAITIVPDASLTVPDQLLSGGMLTLAVGSITSMIILGGLGAVAIESQTSRSALERIRRLANAAYEGLVVVQSGRINDANAAFCDLVGAPLAELVGRPLFGEILTFDEADPSREDVRREGRLRPLVGGREIPVEVFSRLMDDGARVETSGLTVLAVRDLRERRAAEEKIRYLAEHDGLTGLLNRNSLQMRLAAAIDRVEASGESLAVICIDLDHFKEANDQHGHLAGDALLVETARRLQSAVQAPSFAARLGGDEFIVVQIAGGDQPAVAAELAGRLIEMLAAPVPFDGQELAMGSSLGVSLYPDDGRTAEALMANADMALYRAKESGRGVYRFFKREMDDTIRERRNLARDLRQGIADNELIVHYQPLARAADGEVCGFEALVRWKHPTRGMIPPLDFIPVAEENGLIEALGDWVLRRACADAAAWEKPLRIAVNLSPIQLHNPALPTLVHEVLITTGLSPSRLELEITESALFKDYQRALDNLRRLKALGVRIAMDDFGTGFSSLSTLQSFPFDKIKIDKSFVENIHRHDRATAIVRAVLGLGRSLEIPVVAEGVETEEQILFLRGEDCAELQGYAIGRPAPVDALTMWTTAGDPGAIAPKSKTRRSA.

The MHYT domain occupies 19–206; it reads HDLRLVLVAS…FTGMSAITIV (188 aa). Helical transmembrane passes span 23-43, 57-77, 92-112, 122-142, 152-172, 186-206, and 224-244; these read LVLV…RLYS, LLLT…IAMV, TLLS…VASA, GGVL…SAFV, ATVG…LLLA, GMLC…ITIV, and TLAV…AVAI. One can recognise a PAS domain in the interval 254–317; the sequence is ERIRRLANAA…ADPSREDVRR (64 aa). The 135-residue stretch at 402–536 folds into the GGDEF domain; it reads ESLAVICIDL…GRGVYRFFKR (135 aa). Positions 545-795 constitute an EAL domain; sequence RRNLARDLRQ…ALTMWTTAGD (251 aa).

The protein resides in the cell membrane. This is an uncharacterized protein from Caulobacter vibrioides (strain ATCC 19089 / CIP 103742 / CB 15) (Caulobacter crescentus).